Here is a 480-residue protein sequence, read N- to C-terminus: Endothelial transcription factor GATA-2 (480 aa).

Ser-73 is subject to Phosphoserine. Arg-86 is modified (asymmetric dimethylarginine). Residues Ser-119–Asp-209 are disordered. The segment covering Gly-143 to Gly-153 has biased composition (gly residues). Residues Pro-185–Ala-203 show a composition bias toward low complexity. A Phosphoserine modification is found at Ser-192. 2 consecutive GATA-type zinc fingers follow at residues Cys-295–Cys-319 and Cys-349–Cys-373. Residue Lys-389 forms a Glycyl lysine isopeptide (Lys-Gly) (interchain with G-Cter in SUMO2) linkage. The interval His-448–Gly-480 is disordered.

In terms of assembly, interacts with BRD3. Interacts with AR and CCAR1. Interacts with MDFIC. As to expression, endothelial cells.

It localises to the nucleus. Its function is as follows. Transcriptional activator which regulates endothelin-1 gene expression in endothelial cells. Binds to the consensus sequence 5'-AGATAG-3'. The protein is Endothelial transcription factor GATA-2 (GATA2) of Homo sapiens (Human).